A 527-amino-acid polypeptide reads, in one-letter code: Bifunctional purine biosynthesis protein PurH (527 aa).

Positions 1–149 (MASDFLPVHR…KNFARVAVAT (149 aa)) constitute an MGS-like domain.

It belongs to the PurH family.

It carries out the reaction (6R)-10-formyltetrahydrofolate + 5-amino-1-(5-phospho-beta-D-ribosyl)imidazole-4-carboxamide = 5-formamido-1-(5-phospho-D-ribosyl)imidazole-4-carboxamide + (6S)-5,6,7,8-tetrahydrofolate. It catalyses the reaction IMP + H2O = 5-formamido-1-(5-phospho-D-ribosyl)imidazole-4-carboxamide. It functions in the pathway purine metabolism; IMP biosynthesis via de novo pathway; 5-formamido-1-(5-phospho-D-ribosyl)imidazole-4-carboxamide from 5-amino-1-(5-phospho-D-ribosyl)imidazole-4-carboxamide (10-formyl THF route): step 1/1. The protein operates within purine metabolism; IMP biosynthesis via de novo pathway; IMP from 5-formamido-1-(5-phospho-D-ribosyl)imidazole-4-carboxamide: step 1/1. This is Bifunctional purine biosynthesis protein PurH from Xylella fastidiosa (strain 9a5c).